A 610-amino-acid polypeptide reads, in one-letter code: MDEDYYSAVRAQSPKTYLYALTAETHLGEVASVIITTLLASGRLNIKQISVKTKLAIKSIKSAIVSLIQLNCLYYWQDDKNPTIFYYSVNETGLKTLVYSGDILNHITQEYGDEEAEIIQNIIMNGHLKLDDYLRQYDNDLEKSDEASLRLEKEKIFLKLYNEGWIKILSLNDFHHINDIWEKLFDDTLRNTPRSSTTSEVKRLAEAQSVCKEKLMALLEKTKQPLDLYITENGYKKLNPNLVLTFNLTRFQKRSRTVALTNLAKSRIGLITSKVYEAALKSVENGSPDLSHPFLEIPGLINNPTDVKDFKDSLETTLTAEKKIVFTVKDVMRYFPKLLDIKNSVITENSKRSFNDINANPETSNKKIKLENGNAFNTGGGASGANTSNSNNHLTASSFFTDEDRMSIIEQHLRLLAAGTNTQFVHEISPGRYAIPFVKLSNELKQFHYESLVKSTLQDQAFRVLRCIKHLKLADEKSIANAVLLKEKTVRNEVYQLIKANVVEIQEIPRSVDRAASKTFYLVKYKEYHRFESLINCLVYNMAEIVRNIQNFKMENKILLDKCNRVDVEGNEDEMLLDSELKTLHGLQNREVMNLVRFNRTRSLWDIFTL.

The interval 538–559 (LVYNMAEIVRNIQNFKMENKIL) is leucine-zipper.

It belongs to the RNA polymerase beta chain family. Component of the RNA polymerase III (Pol III) complex consisting of 17 subunits.

The protein localises to the nucleus. Functionally, DNA-dependent RNA polymerase catalyzes the transcription of DNA into RNA using the four ribonucleoside triphosphates as substrates. Specific core component of RNA polymerase III which synthesizes small RNAs, such as 5S rRNA and tRNAs. This is DNA-directed RNA polymerase III subunit RPC3 (RPC82) from Lodderomyces elongisporus (strain ATCC 11503 / CBS 2605 / JCM 1781 / NBRC 1676 / NRRL YB-4239) (Yeast).